Reading from the N-terminus, the 345-residue chain is Ferredoxin--NADP reductase (345 aa).

Positions 38, 46, 51, 91, 129, 295, and 336 each coordinate FAD.

It belongs to the ferredoxin--NADP reductase type 2 family. As to quaternary structure, homodimer. Requires FAD as cofactor.

It catalyses the reaction 2 reduced [2Fe-2S]-[ferredoxin] + NADP(+) + H(+) = 2 oxidized [2Fe-2S]-[ferredoxin] + NADPH. The polypeptide is Ferredoxin--NADP reductase (Rhodospirillum rubrum (strain ATCC 11170 / ATH 1.1.1 / DSM 467 / LMG 4362 / NCIMB 8255 / S1)).